We begin with the raw amino-acid sequence, 430 residues long: Asparagine--tRNA ligase (430 aa).

The protein belongs to the class-II aminoacyl-tRNA synthetase family. As to quaternary structure, homodimer.

The protein resides in the cytoplasm. The catalysed reaction is tRNA(Asn) + L-asparagine + ATP = L-asparaginyl-tRNA(Asn) + AMP + diphosphate + H(+). This Staphylococcus aureus (strain bovine RF122 / ET3-1) protein is Asparagine--tRNA ligase.